A 92-amino-acid polypeptide reads, in one-letter code: Small nuclear ribonucleoprotein E (92 aa).

The region spanning 18-92 (INLIFRYLQN…NITLLQSVSN (75 aa)) is the Sm domain.

It belongs to the snRNP Sm proteins family. In terms of assembly, core component of the spliceosomal U1, U2, U4 and U5 small nuclear ribonucleoproteins (snRNPs), the building blocks of the spliceosome. Most spliceosomal snRNPs contain a common set of Sm proteins, SNRPB, SNRPD1, SNRPD2, SNRPD3, SNRPE, SNRPF and SNRPG that assemble in a heptameric protein ring on the Sm site of the small nuclear RNA to form the core snRNP. Component of the U1 snRNP. The U1 snRNP is composed of the U1 snRNA and the 7 core Sm proteins SNRPB, SNRPD1, SNRPD2, SNRPD3, SNRPE, SNRPF and SNRPG, and at least three U1 snRNP-specific proteins SNRNP70/U1-70K, SNRPA/U1-A and SNRPC/U1-C. Component of the U4/U6-U5 tri-snRNP complex composed of the U4, U6 and U5 snRNAs and at least PRPF3, PRPF4, PRPF6, PRPF8, PRPF31, SNRNP200, TXNL4A, SNRNP40, SNRPB, SNRPD1, SNRPD2, SNRPD3, SNRPE, SNRPF, SNRPG, DDX23, CD2BP2, PPIH, SNU13, EFTUD2, SART1 and USP39, plus LSM2, LSM3, LSM4, LSM5, LSM6, LSM7 and LSM8. Component of the U7 snRNP complex, or U7 Sm protein core complex, that is composed of the U7 snRNA and at least LSM10, LSM11, SNRPB, SNRPD3, SNRPE, SNRPF and SNRPG; the complex does not contain SNRPD1 and SNRPD2. Component of the minor spliceosome, which splices U12-type introns. Part of the SMN-Sm complex that contains SMN1, GEMIN2/SIP1, DDX20/GEMIN3, GEMIN4, GEMIN5, GEMIN6, GEMIN7, GEMIN8, STRAP/UNRIP and the Sm proteins SNRPB, SNRPD1, SNRPD2, SNRPD3, SNRPE, SNRPF and SNRPG; catalyzes core snRNPs assembly. Forms a 6S pICln-Sm complex composed of CLNS1A/pICln, SNRPD1, SNRPD2, SNRPE, SNRPF and SNRPG; ring-like structure where CLNS1A/pICln mimics additional Sm proteins and which is unable to assemble into the core snRNP. Interacts with SMN1; the interaction is direct. Interacts with GEMIN2 (via N-terminus); the interaction is direct. Interacts with SNRPF; the interaction is direct. Interacts with SNRPG; the interaction is direct.

It localises to the cytoplasm. The protein resides in the cytosol. The protein localises to the nucleus. Functionally, plays a role in pre-mRNA splicing as a core component of the spliceosomal U1, U2, U4 and U5 small nuclear ribonucleoproteins (snRNPs), the building blocks of the spliceosome. Component of both the pre-catalytic spliceosome B complex and activated spliceosome C complexes. As a component of the minor spliceosome, involved in the splicing of U12-type introns in pre-mRNAs. As part of the U7 snRNP it is involved in histone 3'-end processing. The sequence is that of Small nuclear ribonucleoprotein E (SNRPE) from Bos taurus (Bovine).